The sequence spans 285 residues: Shikimate dehydrogenase (NADP(+)) (285 aa).

Residues 22–24 (SRS) and Thr-71 contribute to the shikimate site. The active-site Proton acceptor is Lys-75. Shikimate-binding residues include Asn-96 and Asp-111. NADP(+) is bound by residues 136–140 (GAGGA), 160–165 (NRTVGR), and Ile-225. Tyr-227 contributes to the shikimate binding site. Gly-248 contributes to the NADP(+) binding site.

This sequence belongs to the shikimate dehydrogenase family. Homodimer.

It carries out the reaction shikimate + NADP(+) = 3-dehydroshikimate + NADPH + H(+). Its pathway is metabolic intermediate biosynthesis; chorismate biosynthesis; chorismate from D-erythrose 4-phosphate and phosphoenolpyruvate: step 4/7. In terms of biological role, involved in the biosynthesis of the chorismate, which leads to the biosynthesis of aromatic amino acids. Catalyzes the reversible NADPH linked reduction of 3-dehydroshikimate (DHSA) to yield shikimate (SA). The polypeptide is Shikimate dehydrogenase (NADP(+)) (Rhizobium etli (strain CIAT 652)).